The chain runs to 362 residues: Putative HLA class I histocompatibility antigen, alpha chain H (362 aa).

Positions methionine 1–alanine 24 are cleaved as a signal peptide. The interval arginine 25–glycine 114 is alpha-1. The Extracellular portion of the chain corresponds to arginine 25 to isoleucine 308. A glycan (N-linked (GlcNAc...) asparagine) is linked at asparagine 110. Residues glycine 115–alanine 206 form an alpha-2 region. Residues aspartate 207–tryptophan 298 form an alpha-3 region. One can recognise an Ig-like C1-type domain in the interval proline 209–arginine 297. The cysteines at positions 227 and 283 are disulfide-linked. The segment at glutamate 299–isoleucine 308 is connecting peptide. A helical membrane pass occupies residues valine 309–tryptophan 332. The Cytoplasmic segment spans residues arginine 333–alanine 362. Residues serine 337–alanine 362 are disordered. Residues glycine 342 to serine 356 are compositionally biased toward low complexity.

It belongs to the MHC class I family. In terms of assembly, heterodimer of an alpha chain and a beta chain (beta-2-microglobulin).

Its subcellular location is the cell membrane. Involved in the presentation of foreign antigens to the immune system. The chain is Putative HLA class I histocompatibility antigen, alpha chain H (HLA-H) from Homo sapiens (Human).